A 146-amino-acid polypeptide reads, in one-letter code: Transcriptional regulator MraZ (146 aa).

2 consecutive SpoVT-AbrB domains span residues Glu5–Asp47 and Ser76–Lys119.

The protein belongs to the MraZ family. As to quaternary structure, forms oligomers.

It localises to the cytoplasm. It is found in the nucleoid. This is Transcriptional regulator MraZ from Dictyoglomus thermophilum (strain ATCC 35947 / DSM 3960 / H-6-12).